The following is a 125-amino-acid chain: Small ribosomal subunit protein bS6m (125 aa).

Belongs to the bacterial ribosomal protein bS6 family. As to quaternary structure, component of the mitochondrial small ribosomal subunit (mt-SSU). Mature mammalian 55S mitochondrial ribosomes consist of a small (28S) and a large (39S) subunit. The 28S small subunit contains a 12S ribosomal RNA (12S mt-rRNA) and 30 different proteins. The 39S large subunit contains a 16S rRNA (16S mt-rRNA), a copy of mitochondrial valine transfer RNA (mt-tRNA(Val)), which plays an integral structural role, and 52 different proteins.

It localises to the mitochondrion. This is Small ribosomal subunit protein bS6m (MRPS6) from Homo sapiens (Human).